The primary structure comprises 117 residues: Ribonuclease P protein component (117 aa).

Belongs to the RnpA family. Consists of a catalytic RNA component (M1 or rnpB) and a protein subunit.

The catalysed reaction is Endonucleolytic cleavage of RNA, removing 5'-extranucleotides from tRNA precursor.. RNaseP catalyzes the removal of the 5'-leader sequence from pre-tRNA to produce the mature 5'-terminus. It can also cleave other RNA substrates such as 4.5S RNA. The protein component plays an auxiliary but essential role in vivo by binding to the 5'-leader sequence and broadening the substrate specificity of the ribozyme. The polypeptide is Ribonuclease P protein component (Desulforapulum autotrophicum (strain ATCC 43914 / DSM 3382 / VKM B-1955 / HRM2) (Desulfobacterium autotrophicum)).